The primary structure comprises 493 residues: Maintenance of mitochondrial morphology protein 1 (493 aa).

Topologically, residues 1–23 (MSQHSQYGVPGVPAQSSLSFTQG) are lumenal. A helical membrane pass occupies residues 24 to 44 (FLLGQLSVVLLIGAFIKFFIF). Topologically, residues 45-493 (GEAPAPPSRG…GSMPRVVRTP (449 aa)) are cytoplasmic. The tract at residues 52–104 (SRGLASRTASHHRSYSINQGDNNANNNTNNGSSPRTLREKPSTSNVLRPVPSS) is disordered. The segment covering 69–81 (NQGDNNANNNTNN) has biased composition (low complexity). Residues 93 to 104 (STSNVLRPVPSS) show a composition bias toward polar residues. One can recognise an SMP-LTD domain in the interval 140-391 (QPESLDWFNV…EPRVQVVGLP (252 aa)). The tract at residues 420–493 (SSRSGGGPVE…GSMPRVVRTP (74 aa)) is disordered.

It belongs to the MMM1 family. Homodimer. Component of the ER-mitochondria encounter structure (ERMES) or MDM complex, composed of mmm1, mdm10, mdm12 and mdm34. A mmm1 homodimer associates with one molecule of mdm12 on each side in a pairwise head-to-tail manner, and the SMP-LTD domains of mmm1 and mdm12 generate a continuous hydrophobic tunnel for phospholipid trafficking.

Its subcellular location is the endoplasmic reticulum membrane. In terms of biological role, component of the ERMES/MDM complex, which serves as a molecular tether to connect the endoplasmic reticulum (ER) and mitochondria. Components of this complex are involved in the control of mitochondrial shape and protein biogenesis, and function in nonvesicular lipid trafficking between the ER and mitochondria. The mdm12-mmm1 subcomplex functions in the major beta-barrel assembly pathway that is responsible for biogenesis of all outer membrane beta-barrel proteins, and acts in a late step after the SAM complex. The mdm10-mdm12-mmm1 subcomplex further acts in the TOM40-specific pathway after the action of the mdm12-mmm1 complex. Essential for establishing and maintaining the structure of mitochondria and maintenance of mtDNA nucleoids. The protein is Maintenance of mitochondrial morphology protein 1 of Talaromyces stipitatus (strain ATCC 10500 / CBS 375.48 / QM 6759 / NRRL 1006) (Penicillium stipitatum).